Reading from the N-terminus, the 515-residue chain is 1-pyrroline-5-carboxylate dehydrogenase (515 aa).

Catalysis depends on residues Glu-286 and Cys-320.

Belongs to the aldehyde dehydrogenase family. RocA subfamily.

The enzyme catalyses L-glutamate 5-semialdehyde + NAD(+) + H2O = L-glutamate + NADH + 2 H(+). The protein operates within amino-acid degradation; L-proline degradation into L-glutamate; L-glutamate from L-proline: step 2/2. The polypeptide is 1-pyrroline-5-carboxylate dehydrogenase (Geobacillus sp. (strain WCH70)).